A 283-amino-acid polypeptide reads, in one-letter code: Tetraspanin-33 (283 aa).

The Cytoplasmic portion of the chain corresponds to 1–24 (MARRPGAPAAYGEDFSFVSPLVKY). Residues 25 to 45 (LLFFFNMLFWVISMVMVAVGV) form a helical membrane-spanning segment. At 46-64 (YARLMKHEEAALACLAVDP) the chain is on the extracellular side. The helical transmembrane segment at 65–85 (AILLIVVGILMFLLTFCGCIG) threads the bilayer. Residues 86-96 (SLRENICLLQT) are Cytoplasmic-facing. The chain crosses the membrane as a helical span at residues 97-117 (FSLCLTVVFLLQLAAGVLGFV). The Extracellular portion of the chain corresponds to 118 to 235 (FSDKVRGKVS…DRLVNWIHSN (118 aa)). Disulfide bonds link Cys-156-Cys-224, Cys-157-Cys-189, Cys-173-Cys-183, and Cys-190-Cys-203. N-linked (GlcNAc...) asparagine glycosylation is present at Asn-172. Residues 236–256 (LFVLGGVALGLAIPQLVGIML) traverse the membrane as a helical segment. Residues 257 to 283 (SMILVSQIKDQIKLQLYNQQHRADPWY) are Cytoplasmic-facing.

Belongs to the tetraspanin (TM4SF) family. Homodimer; disulfide-linked. Interacts (via extracellular domain) with ADAM10 (via extracellular domain). Interacts (via cytoplasmic domain) with PLEKHA7 (via WW domains); the interaction is dependent on PDZD11 being bound to PLEKHA7 and facilitates the docking of ADAM10 to zonula adherens.

The protein resides in the cell membrane. Its subcellular location is the cell junction. It localises to the adherens junction. It is found in the cytoplasm. Part of TspanC8 subgroup, composed of 6 members that interact with the transmembrane metalloprotease ADAM10. This interaction is required for ADAM10 exit from the endoplasmic reticulum and for enzymatic maturation and trafficking to the cell surface as well as substrate specificity. Different TspanC8/ADAM10 complexes have distinct substrates. Plays an important role in normal erythropoiesis. It has a role in the differentiation of erythroid progenitors. Negatively regulates ligand-induced Notch activity probably by regulating ADAM10 activity. Mediates docking of ADAM10 to zonula adherens by interacting with ADAM10 and, in a PDZD11-dependent manner, with the zonula adherens protein PLEKHA7. In Bos taurus (Bovine), this protein is Tetraspanin-33 (TSPAN33).